The primary structure comprises 195 residues: NADH-quinone oxidoreductase subunit C (195 aa).

This sequence belongs to the complex I 30 kDa subunit family. NDH-1 is composed of 14 different subunits. Subunits NuoB, C, D, E, F, and G constitute the peripheral sector of the complex.

It is found in the cell inner membrane. It carries out the reaction a quinone + NADH + 5 H(+)(in) = a quinol + NAD(+) + 4 H(+)(out). Functionally, NDH-1 shuttles electrons from NADH, via FMN and iron-sulfur (Fe-S) centers, to quinones in the respiratory chain. The immediate electron acceptor for the enzyme in this species is believed to be ubiquinone. Couples the redox reaction to proton translocation (for every two electrons transferred, four hydrogen ions are translocated across the cytoplasmic membrane), and thus conserves the redox energy in a proton gradient. The polypeptide is NADH-quinone oxidoreductase subunit C (Laribacter hongkongensis (strain HLHK9)).